Here is a 435-residue protein sequence, read N- to C-terminus: 3-ketoacyl-CoA thiolase (435 aa).

C98 acts as the Acyl-thioester intermediate in catalysis. Residues H391 and C421 each act as proton acceptor in the active site.

Belongs to the thiolase-like superfamily. Thiolase family. In terms of assembly, heterotetramer of two alpha chains (FadJ) and two beta chains (FadI).

The protein localises to the cytoplasm. The enzyme catalyses an acyl-CoA + acetyl-CoA = a 3-oxoacyl-CoA + CoA. It participates in lipid metabolism; fatty acid beta-oxidation. Functionally, catalyzes the final step of fatty acid oxidation in which acetyl-CoA is released and the CoA ester of a fatty acid two carbons shorter is formed. This chain is 3-ketoacyl-CoA thiolase, found in Colwellia psychrerythraea (strain 34H / ATCC BAA-681) (Vibrio psychroerythus).